The sequence spans 427 residues: GTPase ERA-like, chloroplastic (427 aa).

Residues 1–39 (MAVSPHISPTLSRYKFFSTSVVENPNFSPYRIYSRRRVT) constitute a chloroplast transit peptide. Residues 128–298 (RSGYVAVVGM…KEWILSKLPF (171 aa)) enclose the Era-type G domain. The segment at 136–143 (GMPNVGKS) is G1. A GTP-binding site is contributed by 136 to 143 (GMPNVGKS). Positions 162–166 (QTTRH) are G2. Positions 183–186 (DTPG) are G3. GTP contacts are provided by residues 183–187 (DTPGV) and 248–251 (NKKD). The tract at residues 248–251 (NKKD) is G4. Positions 277-279 (VSA) are G5. The KH type-2 domain occupies 329–406 (YRNEVPYACQ…FLEVEVKVKE (78 aa)).

The protein belongs to the TRAFAC class TrmE-Era-EngA-EngB-Septin-like GTPase superfamily. Era GTPase family.

The protein resides in the plastid. It localises to the chloroplast stroma. Its subcellular location is the chloroplast nucleoid. Functionally, nuclear genome-encoded probable GTPase involved in ribosome biogenesis in chloroplasts. Plays a role in 16S rRNA maturation in plastids and may contribute to the assembly of the small (30S) ribosomal subunit. This chain is GTPase ERA-like, chloroplastic, found in Arabidopsis thaliana (Mouse-ear cress).